Reading from the N-terminus, the 359-residue chain is Aminomethyltransferase (359 aa).

The protein belongs to the GcvT family. In terms of assembly, the glycine cleavage system is composed of four proteins: P, T, L and H.

It carries out the reaction N(6)-[(R)-S(8)-aminomethyldihydrolipoyl]-L-lysyl-[protein] + (6S)-5,6,7,8-tetrahydrofolate = N(6)-[(R)-dihydrolipoyl]-L-lysyl-[protein] + (6R)-5,10-methylene-5,6,7,8-tetrahydrofolate + NH4(+). The glycine cleavage system catalyzes the degradation of glycine. In Pseudoalteromonas atlantica (strain T6c / ATCC BAA-1087), this protein is Aminomethyltransferase.